The chain runs to 524 residues: Acetyl-CoA hydrolase (524 aa).

279–283 (GIGNI) contributes to the CoA binding site. The active-site 5-glutamyl coenzyme A thioester intermediate is Glu304. Position 398 (Gly398) interacts with CoA.

The protein belongs to the acetyl-CoA hydrolase/transferase family.

Its subcellular location is the cytoplasm. It carries out the reaction acetyl-CoA + H2O = acetate + CoA + H(+). Functionally, presumably involved in regulating the intracellular acetyl-CoA pool for fatty acid and cholesterol synthesis and fatty acid oxidation. This Yarrowia lipolytica (strain CLIB 122 / E 150) (Yeast) protein is Acetyl-CoA hydrolase (ACH1).